Consider the following 635-residue polypeptide: Probable ethylene response sensor 2 (635 aa).

The next 3 membrane-spanning stretches (helical) occupy residues 24–44 (ISDFFIALAYFSIPLELIYFV), 59–79 (FGAFIVLCGATHLINLWTFAI), and 94–114 (ATAVVSCITALMLVHIIPDLL). Residues cysteine 66 and histidine 70 each contribute to the Cu cation site. Residues 159-308 (DRHTILRTTL…VVADQVAVAL (150 aa)) enclose the GAF domain. The 239-residue stretch at 351-589 (VMNHEMRTPM…MFFVKLGMPE (239 aa)) folds into the Histidine kinase domain. A Phosphohistidine; by autocatalysis modification is found at histidine 354.

It belongs to the ethylene receptor family. In terms of assembly, homodimer. Requires Cu cation as cofactor.

Its subcellular location is the endoplasmic reticulum membrane. It carries out the reaction ATP + protein L-histidine = ADP + protein N-phospho-L-histidine.. Its function is as follows. Ethylene receptor related to bacterial two-component regulators. Acts as a negative regulator of ethylene signaling. May play a role in the regulation of flowering by up-regulating GI (GIGANTEA) and RCN1 and regulate starch accumulation by down-regulating the alpha-amylase AMY3D. The sequence is that of Probable ethylene response sensor 2 (ERS2) from Oryza sativa subsp. japonica (Rice).